The primary structure comprises 469 residues: MDSAVTAVLAGKYPAKQHARRVAEALKASGHDGSGVIYLEGTKTRMAEDSDEAVPFRQRRNFYYLSGCELADSYVTYNIDQDELVLYIPAADPDEVMWTGLPLSPEEALKKYDVDKVLASSEINAHLAHYCTNKETAPKRVYAIPDRVCAETTFLPFDDTNWDALSNALNQCRKVKDDYEIALLKRSNEISALAHLAVMKAAKLAKNERELEAVFRSTCLSHGSRGQSYGPIVAAGVNGATLHYQTNDMDLEDLVTGERPSLLVDAGGEYRLYCSDITRAYPLSGKFSVEARQIYDIVLDMQTQCMDMIKPGVAWDDIHARAHKVAISGLLRLGILRGSEEELFEKRISVAFFPHGLGHYMGMDTHDVGGNPNHADPNPMFRYLRLRGTLSPSEVVTVEPGVYFCRFIIEPYLSSPELGKYIDSAVLDKYWKVGGVRIEDNLVITQDGYLNLTTVPKDPEEVERIVQQG.

Mn(2+) is bound by residues D265, D276, E399, and E439.

It belongs to the peptidase M24B family. The cofactor is Mn(2+).

The catalysed reaction is Release of any N-terminal amino acid, including proline, that is linked to proline, even from a dipeptide or tripeptide.. Catalyzes the removal of a penultimate prolyl residue from the N-termini of peptides. This is Probable Xaa-Pro aminopeptidase PEPP (PEPP) from Coccidioides posadasii (strain RMSCC 757 / Silveira) (Valley fever fungus).